Consider the following 344-residue polypeptide: tRNA N6-adenosine threonylcarbamoyltransferase (344 aa).

Fe cation-binding residues include His-116 and His-120. Substrate-binding positions include 138–142, Asp-171, Gly-184, Asp-188, and Asn-277; that span reads LVSGG. Asp-307 is a binding site for Fe cation.

Belongs to the KAE1 / TsaD family. It depends on Fe(2+) as a cofactor.

Its subcellular location is the cytoplasm. The enzyme catalyses L-threonylcarbamoyladenylate + adenosine(37) in tRNA = N(6)-L-threonylcarbamoyladenosine(37) in tRNA + AMP + H(+). Functionally, required for the formation of a threonylcarbamoyl group on adenosine at position 37 (t(6)A37) in tRNAs that read codons beginning with adenine. Is involved in the transfer of the threonylcarbamoyl moiety of threonylcarbamoyl-AMP (TC-AMP) to the N6 group of A37, together with TsaE and TsaB. TsaD likely plays a direct catalytic role in this reaction. This chain is tRNA N6-adenosine threonylcarbamoyltransferase, found in Latilactobacillus sakei subsp. sakei (strain 23K) (Lactobacillus sakei subsp. sakei).